A 146-amino-acid polypeptide reads, in one-letter code: MSAALSRDATLLAFDYGEKRIGVAIGNLLTRTARALVIVPNLNREHRFKAVGELIAEWKPDALVVGLPLHPDGAPHEMTQRALRFGNQLNGRFNLPVSWVDERYSSVEARAGLRARGDAANRVDAEAARVILQQFLDGLPDQHEFN.

Belongs to the YqgF nuclease family.

Its subcellular location is the cytoplasm. Functionally, could be a nuclease involved in processing of the 5'-end of pre-16S rRNA. The sequence is that of Putative pre-16S rRNA nuclease from Burkholderia thailandensis (strain ATCC 700388 / DSM 13276 / CCUG 48851 / CIP 106301 / E264).